The primary structure comprises 291 residues: MSNKSNRRSLRDIGNTIGRNNIPSDKDNVFVRLSMSPLRTTSQKEFLKPPMRISPNKTDGMKHSIQVTPRRIMSPECLKGYVSKETQSLDRPQFKNSNKNVKIQNSDHITNIIFPTSPTKLTFSNENKIGGDGSLTRIRARFKNGLMSPERIQQQQQQHILPSDAKSNTDLCSNTELKDAPFENDLPRAKLKGKNLLVELKKEEEDVGNGIESLTKSNTKLNSMLANEGKIHKASFQKSVKFKLPDNIVTEETVELKEIKDLLLQMLRRQREIESRLSNIELQLTEIPKHK.

Ser-54 carries the phosphoserine modification. Thr-68 is modified (phosphothreonine). 2 positions are modified to phosphoserine: Ser-74 and Ser-88. The stretch at 254-284 forms a coiled coil; sequence VELKEIKDLLLQMLRRQREIESRLSNIELQL.

In terms of assembly, homooligomer; in vitro, FIN1 self-assembles into 10 nm diameter filaments. Interacts with the 14-3-3 proteins BMH1 and BMH2, and the protein phosphatase 1 complex catalytic subunit GLC7. In terms of processing, phosphorylated by CDC28. Phosphorylation is required for BMH1 and BMH2 interaction. Dephosphorylation by GLC7 depends on the presence of BMH1 and BMH2.

It localises to the nucleus. It is found in the cytoplasm. The protein resides in the cytoskeleton. Its subcellular location is the spindle pole. In terms of biological role, forms cell-cycle specific filaments between the spindle pole bodies of dividing yeast cells. This chain is Filament protein FIN1 (FIN1), found in Saccharomyces cerevisiae (strain ATCC 204508 / S288c) (Baker's yeast).